The following is a 392-amino-acid chain: 6-aminohexanoate-dimer hydrolase (392 aa).

Residues Met1–Gln27 are disordered. Residue Ser112 is part of the active site.

The catalysed reaction is [N-(6-aminohexanoyl)](n) + H2O = [N-(6-aminohexanoyl)](n-1) + 6-aminohexanoate. It catalyses the reaction N-(6-aminohexanoyl)-6-aminohexanoate + H2O = 2 6-aminohexanoate. It functions in the pathway xenobiotic degradation; nylon-6 oligomer degradation. Functionally, involved in nylon oligomer degradation. The sequence is that of 6-aminohexanoate-dimer hydrolase from Paenarthrobacter ureafaciens.